Consider the following 155-residue polypeptide: Molybdopterin synthase catalytic subunit (155 aa).

Substrate-binding positions include 109–110 (HR), K125, and 132–134 (KKE).

Belongs to the MoaE family. MOCS2B subfamily. Heterotetramer; composed of 2 small (MOCS2A) and 2 large (MOCS2B) subunits.

It localises to the cytoplasm. The protein resides in the cytosol. The enzyme catalyses 2 [molybdopterin-synthase sulfur-carrier protein]-C-terminal-Gly-aminoethanethioate + cyclic pyranopterin phosphate + H2O = molybdopterin + 2 [molybdopterin-synthase sulfur-carrier protein]-C-terminal Gly-Gly + 2 H(+). It functions in the pathway cofactor biosynthesis; molybdopterin biosynthesis. Functionally, catalytic subunit of the molybdopterin synthase complex, a complex that catalyzes the conversion of precursor Z into molybdopterin. Acts by mediating the incorporation of 2 sulfur atoms from thiocarboxylated MOCS2A into precursor Z to generate a dithiolene group. The protein is Molybdopterin synthase catalytic subunit of Taeniopygia guttata (Zebra finch).